The chain runs to 286 residues: 4-hydroxy-tetrahydrodipicolinate synthase 2 (286 aa).

Thr45 is a binding site for pyruvate. Tyr133 acts as the Proton donor/acceptor in catalysis. Lys161 serves as the catalytic Schiff-base intermediate with substrate. Ile203 contributes to the pyruvate binding site.

Belongs to the DapA family. In terms of assembly, homotetramer; dimer of dimers.

The protein localises to the cytoplasm. The catalysed reaction is L-aspartate 4-semialdehyde + pyruvate = (2S,4S)-4-hydroxy-2,3,4,5-tetrahydrodipicolinate + H2O + H(+). The protein operates within amino-acid biosynthesis; L-lysine biosynthesis via DAP pathway; (S)-tetrahydrodipicolinate from L-aspartate: step 3/4. Functionally, catalyzes the condensation of (S)-aspartate-beta-semialdehyde [(S)-ASA] and pyruvate to 4-hydroxy-tetrahydrodipicolinate (HTPA). The protein is 4-hydroxy-tetrahydrodipicolinate synthase 2 of Clostridium acetobutylicum (strain ATCC 824 / DSM 792 / JCM 1419 / IAM 19013 / LMG 5710 / NBRC 13948 / NRRL B-527 / VKM B-1787 / 2291 / W).